Reading from the N-terminus, the 300-residue chain is Bifunctional protein FolD (300 aa).

NADP(+) contacts are provided by residues 168-170, Ser193, and Ile234; that span reads GRS.

Belongs to the tetrahydrofolate dehydrogenase/cyclohydrolase family. As to quaternary structure, homodimer.

The enzyme catalyses (6R)-5,10-methylene-5,6,7,8-tetrahydrofolate + NADP(+) = (6R)-5,10-methenyltetrahydrofolate + NADPH. It catalyses the reaction (6R)-5,10-methenyltetrahydrofolate + H2O = (6R)-10-formyltetrahydrofolate + H(+). Its pathway is one-carbon metabolism; tetrahydrofolate interconversion. Its function is as follows. Catalyzes the oxidation of 5,10-methylenetetrahydrofolate to 5,10-methenyltetrahydrofolate and then the hydrolysis of 5,10-methenyltetrahydrofolate to 10-formyltetrahydrofolate. In Ehrlichia ruminantium (strain Welgevonden), this protein is Bifunctional protein FolD.